The primary structure comprises 598 residues: Aspartate--tRNA ligase (598 aa).

L-aspartate is bound at residue E175. The interval 199 to 202 (QLFK) is aspartate. Residue R221 participates in L-aspartate binding. Residues 221-223 (RDE) and Q230 contribute to the ATP site. Position 450 (H450) interacts with L-aspartate. Residue E486 coordinates ATP. R493 is an L-aspartate binding site. Position 538–541 (538–541 (GLDR)) interacts with ATP.

The protein belongs to the class-II aminoacyl-tRNA synthetase family. Type 1 subfamily. In terms of assembly, homodimer.

The protein resides in the cytoplasm. The enzyme catalyses tRNA(Asp) + L-aspartate + ATP = L-aspartyl-tRNA(Asp) + AMP + diphosphate. Its function is as follows. Catalyzes the attachment of L-aspartate to tRNA(Asp) in a two-step reaction: L-aspartate is first activated by ATP to form Asp-AMP and then transferred to the acceptor end of tRNA(Asp). The protein is Aspartate--tRNA ligase of Lactiplantibacillus plantarum (strain ATCC BAA-793 / NCIMB 8826 / WCFS1) (Lactobacillus plantarum).